The sequence spans 434 residues: D-amino acid dehydrogenase (434 aa).

3–17 (VLVLGSGVIGTASAY) lines the FAD pocket.

The protein belongs to the DadA oxidoreductase family. FAD serves as cofactor.

It catalyses the reaction a D-alpha-amino acid + A + H2O = a 2-oxocarboxylate + AH2 + NH4(+). It functions in the pathway amino-acid degradation; D-alanine degradation; NH(3) and pyruvate from D-alanine: step 1/1. Functionally, oxidative deamination of D-amino acids. This chain is D-amino acid dehydrogenase, found in Pseudomonas entomophila (strain L48).